The sequence spans 609 residues: NURS complex subunit pir2 (609 aa).

Residues 1–25 (MSEVHQESEVEYSRWKRERSPERSQ) are compositionally biased toward basic and acidic residues. 2 disordered regions span residues 1–60 (MSEV…RASG) and 187–210 (EKPS…QLSK). Residues 27–36 (RSQSPPGEQS) are compositionally biased toward low complexity. Phosphoserine is present on residues serine 28 and serine 30. Basic and acidic residues predominate over residues 37–57 (AYHRERSPLRKRGNYYDDRTR). Over residues 201-210 (LPSNDPQLSK) the composition is skewed to polar residues. The C2H2-type zinc finger occupies 474–499 (YRCHVGTCAKLFLGPEFVRKHINKKH).

Belongs to the ARS2 family. Interacts with ccr4.

Its subcellular location is the nucleus. The protein is NURS complex subunit pir2 of Schizosaccharomyces pombe (strain 972 / ATCC 24843) (Fission yeast).